The following is a 204-amino-acid chain: Inner membrane-spanning protein YciB (204 aa).

Helical transmembrane passes span 3–23 (AEISPLLKFVLELGPLMVFFF), 45–65 (IFIATGLFMIATATALTVSWI), 70–90 (LPIMPLISGIVVFVFGALTLW), 107–127 (LFGVILLGGLFFGQSLLGYVF), 145–165 (WGVFFLFLAVLNEVVWRMFTT), and 168–188 (WVAFKVWGTMPITIIFTMAQM).

This sequence belongs to the YciB family.

It localises to the cell inner membrane. Plays a role in cell envelope biogenesis, maintenance of cell envelope integrity and membrane homeostasis. This chain is Inner membrane-spanning protein YciB, found in Agrobacterium fabrum (strain C58 / ATCC 33970) (Agrobacterium tumefaciens (strain C58)).